The primary structure comprises 510 residues: Lysine--tRNA ligase (510 aa).

Glu420 and Glu427 together coordinate Mg(2+).

This sequence belongs to the class-II aminoacyl-tRNA synthetase family. Homodimer. It depends on Mg(2+) as a cofactor.

The protein resides in the cytoplasm. It catalyses the reaction tRNA(Lys) + L-lysine + ATP = L-lysyl-tRNA(Lys) + AMP + diphosphate. The protein is Lysine--tRNA ligase of Vibrio vulnificus (strain YJ016).